The primary structure comprises 365 residues: Peptide chain release factor 2 (365 aa).

An N5-methylglutamine modification is found at Gln-251.

The protein belongs to the prokaryotic/mitochondrial release factor family. Methylated by PrmC. Methylation increases the termination efficiency of RF2.

It is found in the cytoplasm. Its function is as follows. Peptide chain release factor 2 directs the termination of translation in response to the peptide chain termination codons UGA and UAA. The sequence is that of Peptide chain release factor 2 from Aliarcobacter butzleri (strain RM4018) (Arcobacter butzleri).